The primary structure comprises 301 residues: MRIAILSQGPELYSTKRLVEAAQLRGHEVHVINPLECYMNINMRQSSIHIGGRELPTFDAVIPRIGASITFYGSAVLRQFEMMGVYALNDSVGISRSRDKLRSMQLMSRRGIGLPITGFANKPSDIPDLIDMVGGAPLVIKLLEGTQGIGVVLAETRKAAESVIEAFMGLKANIMVQEYIKEANGADIRCFVLGDKVIAAMKRQAMPGEFRSNLHRGGTASLVKLTPEERSVAIRAAKTMGLNVAGVDLLRSNHGPVIMEVNSSPGLEGIEGATTKDVAGAIIEFVEKNVTKVKKVTQAQG.

The 184-residue stretch at 104–287 folds into the ATP-grasp domain; that stretch reads MQLMSRRGIG…VAGAIIEFVE (184 aa). Residues Lys-141, 178-179, Asp-187, and 211-213 each bind ATP; these read EY and RSN. Mg(2+) contacts are provided by Asp-248, Glu-260, and Asn-262. The Mn(2+) site is built by Asp-248, Glu-260, and Asn-262.

Belongs to the RimK family. Mg(2+) serves as cofactor. The cofactor is Mn(2+).

In Shewanella putrefaciens (strain CN-32 / ATCC BAA-453), this protein is Probable alpha-L-glutamate ligase 1.